We begin with the raw amino-acid sequence, 35 residues long: Photosystem II reaction center protein Psb30 (35 aa).

Residues 7–27 form a helical membrane-spanning segment; that stretch reads LIANFAALALITLAGPAVIFI.

The protein belongs to the Psb30/Ycf12 family. In terms of assembly, PSII is composed of 1 copy each of membrane proteins PsbA, PsbB, PsbC, PsbD, PsbE, PsbF, PsbH, PsbI, PsbJ, PsbK, PsbL, PsbM, PsbT, PsbX, PsbY, PsbZ, Psb30/Ycf12, peripheral proteins of the oxygen-evolving complex and a large number of cofactors. It forms dimeric complexes.

Its subcellular location is the plastid. It localises to the organellar chromatophore thylakoid membrane. In terms of biological role, a core subunit of photosystem II (PSII), probably helps stabilize the reaction center. The protein is Photosystem II reaction center protein Psb30 of Paulinella chromatophora.